Reading from the N-terminus, the 355-residue chain is CRAL-TRIO domain-containing protein C365.01 (355 aa).

The CRAL-TRIO domain occupies 93–260 (ENGLNQNFVK…SMHGQFDETK (168 aa)).

This is CRAL-TRIO domain-containing protein C365.01 from Schizosaccharomyces pombe (strain 972 / ATCC 24843) (Fission yeast).